The sequence spans 431 residues: CCA tRNA nucleotidyltransferase 1, mitochondrial (431 aa).

Residues 1 to 31 constitute a mitochondrion transit peptide; it reads MWAKLFLRPSFVNRVHLTWSCRALLTMQLKT. G61 and R64 together coordinate ATP. CTP-binding residues include G61 and R64. Mg(2+) is bound by residues D74 and D76. Residues R148, D191, R194, R197, and R200 each coordinate ATP. Residues R148, D191, R194, R197, and R200 each coordinate CTP.

This sequence belongs to the tRNA nucleotidyltransferase/poly(A) polymerase family. In terms of assembly, monomer, and homodimer. Mg(2+) is required as a cofactor. As to expression, expressed ubiquitously during early embryogenesis.

The protein resides in the mitochondrion. The protein localises to the cytoplasm. It is found in the nucleus. The enzyme catalyses a tRNA precursor + 2 CTP + ATP = a tRNA with a 3' CCA end + 3 diphosphate. It carries out the reaction a tRNA with a 3' CCA end + 2 CTP + ATP = a tRNA with a 3' CCACCA end + 3 diphosphate. Nucleotidyltransferase that catalyzes the addition and repair of the essential 3'-terminal CCA sequence in tRNAs, which is necessary for the attachment of amino acids to the 3' terminus of tRNA molecules, using CTP and ATP as substrates. tRNA 3'-terminal CCA addition is required both for tRNA processing and repair. Promotes tRNA repair and recycling downstream of the ribosome-associated quality control (RQC) pathway by mediating addition of the tRNA 3'-terminal CCA following cleavage by ankzf1 and repair by elac1. Also involved in tRNA surveillance by mediating tandem CCA addition to generate a CCACCA at the 3' terminus of unstable tRNAs and tRNA-like transcripts. While stable tRNAs receive only 3'-terminal CCA, unstable tRNAs beginning with GG are marked with CCACCA and rapidly degraded. The structural flexibility of RNA controls the choice between CCA versus CCACCA addition: following the first CCA addition cycle, nucleotide-binding to the active site triggers a clockwise screw motion, producing torque on the RNA. This ejects stable RNAs, whereas unstable RNAs are refolded while bound to the enzyme and subjected to a second CCA catalytic cycle. In Danio rerio (Zebrafish), this protein is CCA tRNA nucleotidyltransferase 1, mitochondrial.